Here is a 147-residue protein sequence, read N- to C-terminus: Cell division protein SepF 1 (147 aa).

This sequence belongs to the SepF family. Homodimer. Interacts with FtsZ.

The protein localises to the cytoplasm. In terms of biological role, cell division protein that is part of the divisome complex and is recruited early to the Z-ring. Probably stimulates Z-ring formation, perhaps through the cross-linking of FtsZ protofilaments. Its function overlaps with FtsA. The sequence is that of Cell division protein SepF 1 from Desulforamulus reducens (strain ATCC BAA-1160 / DSM 100696 / MI-1) (Desulfotomaculum reducens).